A 297-amino-acid polypeptide reads, in one-letter code: Acetylglutamate kinase (297 aa).

Residues 70–71, Arg92, and Asn194 each bind substrate; that span reads GG.

The protein belongs to the acetylglutamate kinase family. ArgB subfamily.

Its subcellular location is the cytoplasm. The enzyme catalyses N-acetyl-L-glutamate + ATP = N-acetyl-L-glutamyl 5-phosphate + ADP. The protein operates within amino-acid biosynthesis; L-arginine biosynthesis; N(2)-acetyl-L-ornithine from L-glutamate: step 2/4. Functionally, catalyzes the ATP-dependent phosphorylation of N-acetyl-L-glutamate. This is Acetylglutamate kinase from Janthinobacterium sp. (strain Marseille) (Minibacterium massiliensis).